A 362-amino-acid polypeptide reads, in one-letter code: mRNA decay activator protein ZFP36L2 (362 aa).

Over residues 100–109 (SFSENGERSQ) the composition is skewed to basic and acidic residues. The interval 100–126 (SFSENGERSQHLLHLQQQQQQKAGAQV) is disordered. Positions 111–120 (LLHLQQQQQQ) are enriched in low complexity. The RNA-binding motif lies at 130 to 135 (RYKTEL). 2 C3H1-type zinc fingers span residues 130–158 (RYKTELCRPFEESGACKYGEKCQFAHGFH) and 168–196 (KYKTELCRTFHTIGFCPYGPRCHFIHNAE). Residues 147 to 188 (YGEKCQFAHGFHELRSLTRHPKYKTELCRTFHTIGFCPYGPR) form an RNA-binding region. 2 disordered regions span residues 225–244 (DSPLLESPTSRTPPPQSSSS) and 306–362 (SESP…ISDD). Residues 327 to 346 (YLSGSLSSGSLSGSDSPTLD) are compositionally biased toward low complexity.

In terms of processing, phosphorylated.

The protein resides in the nucleus. Its subcellular location is the cytoplasm. Zinc-finger RNA-binding protein that destabilizes several cytoplasmic AU-rich element (ARE)-containing mRNA transcripts by promoting their poly(A) tail removal or deadenylation, and hence provide a mechanism for attenuating protein synthesis. Acts as a 3'-untranslated region (UTR) ARE mRNA-binding adapter protein to communicate signaling events to the mRNA decay machinery. Functions by recruiting the CCR4-NOT deadenylase complex and probably other components of the cytoplasmic RNA decay machinery to the bound ARE-containing mRNAs, and hence promotes ARE-mediated mRNA deadenylation and decay processes. Binds to 3'-UTR ARE of numerous mRNAs. Also induces the degradation of ARE-containing mRNAs even in absence of poly(A) tail. Required for tubulogenesis during pronephros development. The sequence is that of mRNA decay activator protein ZFP36L2 (zfp36l2) from Xenopus tropicalis (Western clawed frog).